Reading from the N-terminus, the 676-residue chain is Protein cereblon (676 aa).

Positions Met-1–Glu-11 are enriched in acidic residues. Disordered stretches follow at residues Met-1–His-78, Glu-118–Arg-194, and Asp-249–Asp-276. 2 stretches are compositionally biased toward low complexity: residues Thr-12 to Ala-33 and Val-125 to Ala-139. The segment covering Leu-156–Ser-177 has biased composition (polar residues). The region spanning Arg-314 to Ser-542 is the Lon N-terminal domain. The 110-residue stretch at Glu-541–Lys-650 folds into the CULT domain. The Zn(2+) site is built by Cys-546, Cys-549, Cys-615, and Cys-618.

This sequence belongs to the CRBN family. As to quaternary structure, likely a component of a DCX (DDB1-CUL4-X-box) protein ligase complex. May interact with pic/DDB1. In terms of processing, ubiquitinated.

It is found in the nucleus. It participates in protein modification; protein ubiquitination. Functionally, substrate recognition component of a DCX (DDB1-CUL4-X-box) E3 protein ligase complex that mediates the ubiquitination and subsequent proteasomal degradation of target proteins. Has an essential role in mediating growth by negatively regulating insulin signaling. It also has a role in maintaining presynaptic function in the neuromuscular junction synapses of third-instar larvae. This chain is Protein cereblon, found in Drosophila mojavensis (Fruit fly).